The following is a 301-amino-acid chain: Mycothiol acetyltransferase (301 aa).

2 consecutive N-acetyltransferase domains span residues 7–150 and 152–301; these read VDWQ…PPVD and VRFA…AVEG. Residue Asp39 coordinates 1D-myo-inositol 2-(L-cysteinylamino)-2-deoxy-alpha-D-glucopyranoside. Acetyl-CoA contacts are provided by residues 80 to 82 and 88 to 93; these read LVV and RRGIGS. Glu179, Lys220, and Glu228 together coordinate 1D-myo-inositol 2-(L-cysteinylamino)-2-deoxy-alpha-D-glucopyranoside. 232–234 lines the acetyl-CoA pocket; that stretch reads VGV. Tyr271 contacts 1D-myo-inositol 2-(L-cysteinylamino)-2-deoxy-alpha-D-glucopyranoside. An acetyl-CoA-binding site is contributed by 276 to 281; sequence NTAAVK.

The protein belongs to the acetyltransferase family. MshD subfamily. Monomer.

It catalyses the reaction 1D-myo-inositol 2-(L-cysteinylamino)-2-deoxy-alpha-D-glucopyranoside + acetyl-CoA = mycothiol + CoA + H(+). Functionally, catalyzes the transfer of acetyl from acetyl-CoA to desacetylmycothiol (Cys-GlcN-Ins) to form mycothiol. This is Mycothiol acetyltransferase from Mycolicibacterium vanbaalenii (strain DSM 7251 / JCM 13017 / BCRC 16820 / KCTC 9966 / NRRL B-24157 / PYR-1) (Mycobacterium vanbaalenii).